The chain runs to 278 residues: Putative protein-disulfide oxidoreductase RF_0032 (278 aa).

Positions 1-18 (MRSIFIVPIFLLFLSSCS) are cleaved as a signal peptide. The segment at 62-84 (VPANDNNQTDEVSTPPSQEQKNP) is disordered. A compositionally biased stretch (polar residues) spans 65–81 (NDNNQTDEVSTPPSQEQ). Residues 77–266 (PSQEQKNPEI…ISTAVDKALE (190 aa)) enclose the Thioredoxin domain. C119 and C122 form a disulfide bridge.

This sequence belongs to the thioredoxin family. DsbA subfamily.

Its subcellular location is the periplasm. Its function is as follows. May be required for disulfide bond formation in some proteins. This is Putative protein-disulfide oxidoreductase RF_0032 from Rickettsia felis (strain ATCC VR-1525 / URRWXCal2) (Rickettsia azadi).